A 621-amino-acid polypeptide reads, in one-letter code: Glutamine--fructose-6-phosphate aminotransferase [isomerizing] (621 aa).

The Nucleophile; for GATase activity role is filled by cysteine 2. In terms of domain architecture, Glutamine amidotransferase type-2 spans 2–223; the sequence is CGIIGYVGEG…DRELGIISIS (222 aa). 2 consecutive SIS domains span residues 289–436 and 470–611; these read LHLE…HKFT and LSKQ…IDKP. The active-site For Fru-6P isomerization activity is lysine 616.

Homodimer.

Its subcellular location is the plastid. It is found in the chloroplast. It carries out the reaction D-fructose 6-phosphate + L-glutamine = D-glucosamine 6-phosphate + L-glutamate. Its function is as follows. Catalyzes the first step in hexosamine metabolism, converting fructose-6P into glucosamine-6P using glutamine as a nitrogen source. The polypeptide is Glutamine--fructose-6-phosphate aminotransferase [isomerizing] (Cyanidium caldarium (Red alga)).